A 152-amino-acid chain; its full sequence is Ferredoxin-thioredoxin reductase catalytic chain, chloroplastic (152 aa).

A chloroplast-targeting transit peptide spans 1-38 (MTSTVTTTVGCGGLPVRPLSTATRGRPRRCAVRAQAAG). Residue Cys-91 coordinates [4Fe-4S] cluster. The active-site Nucleophile is Cys-93. Cys-93 and Cys-123 form a disulfide bridge. The [4Fe-4S] cluster site is built by Cys-110, Cys-112, and Cys-121.

Belongs to the ferredoxin thioredoxin reductase beta subunit family. In terms of assembly, heterodimer of subunit A (variable subunit) and subunit B (catalytic subunit). Heterodimeric FTR forms a complex with ferredoxin and thioredoxin. Requires [4Fe-4S] cluster as cofactor.

The protein localises to the plastid. It localises to the chloroplast. It carries out the reaction [thioredoxin]-disulfide + 2 reduced [2Fe-2S]-[ferredoxin] + 2 H(+) = [thioredoxin]-dithiol + 2 oxidized [2Fe-2S]-[ferredoxin]. Functionally, catalytic subunit of the ferredoxin-thioredoxin reductase (FTR), which catalyzes the two-electron reduction of thioredoxins by the electrons provided by reduced ferredoxin. In Zea mays (Maize), this protein is Ferredoxin-thioredoxin reductase catalytic chain, chloroplastic (FTRC).